The following is a 126-amino-acid chain: uncharacterized protein (126 aa).

At 1–9 (MCTYIITQS) the chain is on the extracellular side. The chain crosses the membrane as a helical span at residues 10 to 30 (FFFLPCLSFLFFKLVGFFDSV). Residues 31-73 (FTAGKSLRIMFELPIFDKLTSCFAAIDCSATSLDIPFAEEELF) are Cytoplasmic-facing. A helical transmembrane segment spans residues 74-94 (LMLVSEPVLIPFLFVFEFMLI). Residues 95–126 (CKPCGSRSRFGFPVKNVSDFEETLEFDPTLLV) are Extracellular-facing.

Its subcellular location is the membrane. This is an uncharacterized protein from Saccharomyces cerevisiae (strain ATCC 204508 / S288c) (Baker's yeast).